The following is a 1921-amino-acid chain: Endoribonuclease Dicer (1921 aa).

The Helicase ATP-binding domain maps to 51-227 (LLEAALDHNT…ELEEKIKKLE (177 aa)). Residue 64-71 (LNTGSGKT) coordinates ATP. The DECH box motif lies at 175 to 178 (DECH). Positions 409-433 (YVSWSDSEDDDEDEEIEEKEKPETN) are disordered. Over residues 414 to 425 (DSEDDDEDEEIE) the composition is skewed to acidic residues. The region spanning 433–602 (NFPSPFTNIL…SVDTSETETE (170 aa)) is the Helicase C-terminal domain. One can recognise a Dicer dsRNA-binding fold domain in the interval 630 to 722 (AIGHINRYCA…MPVGKETVKY (93 aa)). A disordered region spans residues 727-746 (DLHDEEETSVPGRPGSTKRR). The region spanning 895–1042 (KFMEDIEKSE…LVPELCAIHP (148 aa)) is the PAZ domain. Residues 1270–1289 (NLSKDKVDSEKNTSSGYSSK) form a disordered region. RNase III domains are found at residues 1277 to 1404 (DSEK…EETT) and 1665 to 1823 (FENF…MDSG). Mg(2+) is bound by residues glutamate 1317, aspartate 1396, glutamate 1399, and glutamate 1704. Residues 1782–1801 (QGMDSELRRSEEDEEKEEDI) are disordered. Residues aspartate 1809 and glutamate 1812 each contribute to the Mg(2+) site. The 66-residue stretch at 1848–1913 (VPRSPVRELL…ARRALRSLKA (66 aa)) folds into the DRBM domain.

This sequence belongs to the helicase family. Dicer subfamily. As to quaternary structure, component of the RISC loading complex (RLC), or micro-RNA (miRNA) loading complex (miRLC), which is composed of DICER1, AGO2 and TARBP2; DICER1 and TARBP2 are required to process precursor miRNAs (pre-miRNAs) to mature miRNAs and then load them onto AGO2. Note that the trimeric RLC/miRLC is also referred to as RISC. Mg(2+) is required as a cofactor. It depends on Mn(2+) as a cofactor.

It is found in the cytoplasm. The enzyme catalyses Endonucleolytic cleavage to 5'-phosphomonoester.. Double-stranded RNA (dsRNA) endoribonuclease playing a central role in short dsRNA-mediated post-transcriptional gene silencing. Cleaves naturally occurring long dsRNAs and short hairpin pre-microRNAs (miRNA) into fragments of twenty-one to twenty-three nucleotides with 3' overhang of two nucleotides, producing respectively short interfering RNAs (siRNA) and mature microRNAs. SiRNAs and miRNAs serve as guide to direct the RNA-induced silencing complex (RISC) to complementary RNAs to degrade them or prevent their translation. Gene silencing mediated by siRNAs, also called RNA interference, controls the elimination of transcripts from mobile and repetitive DNA elements of the genome but also the degradation of exogenous RNA of viral origin for instance. The miRNA pathway on the other side is a mean to specifically regulate the expression of target genes. The polypeptide is Endoribonuclease Dicer (DICER1) (Gallus gallus (Chicken)).